Here is a 116-residue protein sequence, read N- to C-terminus: HVA22-like protein e (116 aa).

Helical transmembrane passes span 12–32, 42–62, and 63–83; these read HSLA…VIAI, QWLA…ILQS, and LLEW…WLVL.

It belongs to the DP1 family. Predominantly expressed in stem.

The protein localises to the membrane. The protein is HVA22-like protein e (HVA22E) of Arabidopsis thaliana (Mouse-ear cress).